Consider the following 247-residue polypeptide: Pyridoxine 5'-phosphate synthase (247 aa).

Asn-12 provides a ligand contact to 3-amino-2-oxopropyl phosphate. Residue 14 to 15 participates in 1-deoxy-D-xylulose 5-phosphate binding; the sequence is DH. Arg-23 contacts 3-amino-2-oxopropyl phosphate. The Proton acceptor role is filled by His-48. 2 residues coordinate 1-deoxy-D-xylulose 5-phosphate: Arg-50 and His-55. Glu-75 acts as the Proton acceptor in catalysis. Thr-105 lines the 1-deoxy-D-xylulose 5-phosphate pocket. His-196 functions as the Proton donor in the catalytic mechanism. Residues Gly-197 and 218–219 each bind 3-amino-2-oxopropyl phosphate; that span reads GH.

This sequence belongs to the PNP synthase family. As to quaternary structure, homooctamer; tetramer of dimers.

The protein resides in the cytoplasm. The catalysed reaction is 3-amino-2-oxopropyl phosphate + 1-deoxy-D-xylulose 5-phosphate = pyridoxine 5'-phosphate + phosphate + 2 H2O + H(+). Its pathway is cofactor biosynthesis; pyridoxine 5'-phosphate biosynthesis; pyridoxine 5'-phosphate from D-erythrose 4-phosphate: step 5/5. Its function is as follows. Catalyzes the complicated ring closure reaction between the two acyclic compounds 1-deoxy-D-xylulose-5-phosphate (DXP) and 3-amino-2-oxopropyl phosphate (1-amino-acetone-3-phosphate or AAP) to form pyridoxine 5'-phosphate (PNP) and inorganic phosphate. The sequence is that of Pyridoxine 5'-phosphate synthase from Pseudomonas fluorescens (strain SBW25).